Here is a 449-residue protein sequence, read N- to C-terminus: Asparagine--tRNA ligase (449 aa).

This sequence belongs to the class-II aminoacyl-tRNA synthetase family. As to quaternary structure, homodimer.

The protein localises to the cytoplasm. The catalysed reaction is tRNA(Asn) + L-asparagine + ATP = L-asparaginyl-tRNA(Asn) + AMP + diphosphate + H(+). The sequence is that of Asparagine--tRNA ligase from Deinococcus geothermalis (strain DSM 11300 / CIP 105573 / AG-3a).